We begin with the raw amino-acid sequence, 372 residues long: Spermidine/putrescine import ATP-binding protein PotA (372 aa).

Residues 11 to 241 (IELRSITKSY…PANLFVARFI (231 aa)) enclose the ABC transporter domain. An ATP-binding site is contributed by 43–50 (GPSGCGKT).

It belongs to the ABC transporter superfamily. Spermidine/putrescine importer (TC 3.A.1.11.1) family. As to quaternary structure, the complex is composed of two ATP-binding proteins (PotA), two transmembrane proteins (PotB and PotC) and a solute-binding protein (PotD).

The protein resides in the cell inner membrane. It catalyses the reaction ATP + H2O + polyamine-[polyamine-binding protein]Side 1 = ADP + phosphate + polyamineSide 2 + [polyamine-binding protein]Side 1.. Its function is as follows. Part of the ABC transporter complex PotABCD involved in spermidine/putrescine import. Responsible for energy coupling to the transport system. The chain is Spermidine/putrescine import ATP-binding protein PotA from Aggregatibacter actinomycetemcomitans (Actinobacillus actinomycetemcomitans).